A 61-amino-acid chain; its full sequence is Protein translocase subunit SecE (61 aa).

A helical transmembrane segment spans residues 39-59; it reads LGILVIGLVGMLIRIIGILML.

This sequence belongs to the SecE/SEC61-gamma family. In terms of assembly, component of the Sec protein translocase complex. Heterotrimer consisting of SecY (alpha), SecG (beta) and SecE (gamma) subunits. The heterotrimers can form oligomers, although 1 heterotrimer is thought to be able to translocate proteins. Interacts with the ribosome. May interact with SecDF, and other proteins may be involved.

The protein resides in the cell membrane. Its function is as follows. Essential subunit of the Sec protein translocation channel SecYEG. Clamps together the 2 halves of SecY. May contact the channel plug during translocation. In Pyrococcus horikoshii (strain ATCC 700860 / DSM 12428 / JCM 9974 / NBRC 100139 / OT-3), this protein is Protein translocase subunit SecE.